Consider the following 149-residue polypeptide: Large ribosomal subunit protein bL9 (149 aa).

It belongs to the bacterial ribosomal protein bL9 family.

In terms of biological role, binds to the 23S rRNA. The sequence is that of Large ribosomal subunit protein bL9 from Helicobacter pylori (strain G27).